Reading from the N-terminus, the 101-residue chain is Small ribosomal subunit protein uS14 (101 aa).

It belongs to the universal ribosomal protein uS14 family. As to quaternary structure, part of the 30S ribosomal subunit. Contacts proteins S3 and S10.

Functionally, binds 16S rRNA, required for the assembly of 30S particles and may also be responsible for determining the conformation of the 16S rRNA at the A site. The sequence is that of Small ribosomal subunit protein uS14 from Chromohalobacter salexigens (strain ATCC BAA-138 / DSM 3043 / CIP 106854 / NCIMB 13768 / 1H11).